Consider the following 1049-residue polypeptide: Isoleucine--tRNA ligase (1049 aa).

The 'HIGH' region motif lies at 48–58 (PYTTGRIHLGT). The 'KMSKS' region signature appears at 596–600 (KMSKS). Residue lysine 599 coordinates ATP.

This sequence belongs to the class-I aminoacyl-tRNA synthetase family. IleS type 2 subfamily. Monomer. The cofactor is Zn(2+).

Its subcellular location is the cytoplasm. The enzyme catalyses tRNA(Ile) + L-isoleucine + ATP = L-isoleucyl-tRNA(Ile) + AMP + diphosphate. Functionally, catalyzes the attachment of isoleucine to tRNA(Ile). As IleRS can inadvertently accommodate and process structurally similar amino acids such as valine, to avoid such errors it has two additional distinct tRNA(Ile)-dependent editing activities. One activity is designated as 'pretransfer' editing and involves the hydrolysis of activated Val-AMP. The other activity is designated 'posttransfer' editing and involves deacylation of mischarged Val-tRNA(Ile). This chain is Isoleucine--tRNA ligase, found in Methanothrix thermoacetophila (strain DSM 6194 / JCM 14653 / NBRC 101360 / PT) (Methanosaeta thermophila).